Consider the following 306-residue polypeptide: Ribonuclease Z (306 aa).

Zn(2+) contacts are provided by His63, His65, Asp67, His68, His140, Asp211, and His269. Catalysis depends on Asp67, which acts as the Proton acceptor.

Belongs to the RNase Z family. Homodimer. The cofactor is Zn(2+).

It catalyses the reaction Endonucleolytic cleavage of RNA, removing extra 3' nucleotides from tRNA precursor, generating 3' termini of tRNAs. A 3'-hydroxy group is left at the tRNA terminus and a 5'-phosphoryl group is left at the trailer molecule.. Functionally, zinc phosphodiesterase, which displays some tRNA 3'-processing endonuclease activity. Probably involved in tRNA maturation, by removing a 3'-trailer from precursor tRNA. In Listeria monocytogenes serovar 1/2a (strain ATCC BAA-679 / EGD-e), this protein is Ribonuclease Z.